Reading from the N-terminus, the 231-residue chain is Large ribosomal subunit protein uL1 (231 aa).

It belongs to the universal ribosomal protein uL1 family. As to quaternary structure, part of the 50S ribosomal subunit.

In terms of biological role, binds directly to 23S rRNA. The L1 stalk is quite mobile in the ribosome, and is involved in E site tRNA release. Its function is as follows. Protein L1 is also a translational repressor protein, it controls the translation of the L11 operon by binding to its mRNA. The chain is Large ribosomal subunit protein uL1 from Pseudomonas syringae pv. syringae (strain B728a).